The sequence spans 135 residues: T-cell receptor gamma chain V region V108A (135 aa).

The first 18 residues, 1 to 18 (MLLLRWFTSCCLWVFGLG), serve as a signal peptide directing secretion. Positions 19–116 (QLEQTELSVT…EATYYCAVWM (98 aa)) are v segment. The j segment stretch occupies residues 117–135 (RWSSGFHKVFAEGTKLIVI).

This is T-cell receptor gamma chain V region V108A from Mus musculus (Mouse).